A 562-amino-acid polypeptide reads, in one-letter code: NAD-dependent malic enzyme (562 aa).

Residue Tyr101 is the Proton donor of the active site. Position 154 (Arg154) interacts with NAD(+). Lys172 functions as the Proton acceptor in the catalytic mechanism. 3 residues coordinate a divalent metal cation: Glu243, Asp244, and Asp267. NAD(+)-binding residues include Asp267 and Asn415.

This sequence belongs to the malic enzymes family. As to quaternary structure, homotetramer. Requires Mg(2+) as cofactor. Mn(2+) serves as cofactor.

The catalysed reaction is (S)-malate + NAD(+) = pyruvate + CO2 + NADH. It catalyses the reaction oxaloacetate + H(+) = pyruvate + CO2. This is NAD-dependent malic enzyme from Shewanella halifaxensis (strain HAW-EB4).